The following is a 192-amino-acid chain: MRLPGIPDEEFIRVEKIPMTKEEIRVLALSKARLFDGAKFIDIGSGTGSVTVEAGLVVGEKGKVWAIEKDKDAVELTKKNVEKFKLNNVVIIEGEAPEALDHVDSEVDAIFIGGTERLEEILLSSDKKLKNGGRIVIDAILLETVNKALSTLNQMGYKTDVIEVIIAKGMKTSKGYAMISRNPIFIVYGEKP.

S-adenosyl-L-methionine-binding positions include threonine 20, 44–48 (GSGTG), glutamate 68, and alanine 96.

Belongs to the methyltransferase superfamily. Archaeal-type CbiT family.

It catalyses the reaction Co-precorrin-6B + S-adenosyl-L-methionine = Co-precorrin-7 + S-adenosyl-L-homocysteine + CO2. The protein operates within cofactor biosynthesis; adenosylcobalamin biosynthesis; cob(II)yrinate a,c-diamide from sirohydrochlorin (anaerobic route): step 8/10. Its function is as follows. Catalyzes the methylation of C-15 in cobalt-precorrin-6B followed by the decarboxylation of C-12 to form cobalt-precorrin-7. This chain is Probable cobalt-precorrin-6B C(15)-methyltransferase (decarboxylating), found in Sulfurisphaera tokodaii (strain DSM 16993 / JCM 10545 / NBRC 100140 / 7) (Sulfolobus tokodaii).